We begin with the raw amino-acid sequence, 436 residues long: G2/mitotic-specific cyclin-B (436 aa).

Residues 1–17 (MSTINNPLNIKTRSHSS) show a composition bias toward polar residues. Residues 1-33 (MSTINNPLNIKTRSHSSMGGGMIMDENKVPKSS) are disordered.

This sequence belongs to the cyclin family. Cyclin AB subfamily. Interacts with the cdk1 protein kinase to form a serine/threonine kinase holoenzyme complex also known as maturation promoting factor (MPF). The cyclin subunit imparts substrate specificity to the complex.

Its function is as follows. Essential for the control of the cell cycle at the G2/M (mitosis) transition. The sequence is that of G2/mitotic-specific cyclin-B (cycB) from Dictyostelium discoideum (Social amoeba).